A 113-amino-acid polypeptide reads, in one-letter code: Hydrogenase maturation factor HypA (113 aa).

His-2 provides a ligand contact to Ni(2+). Cys-73, Cys-76, Cys-89, and Cys-92 together coordinate Zn(2+).

Belongs to the HypA/HybF family.

In terms of biological role, involved in the maturation of [NiFe] hydrogenases. Required for nickel insertion into the metal center of the hydrogenase. This is Hydrogenase maturation factor HypA from Xanthobacter autotrophicus (strain ATCC BAA-1158 / Py2).